Consider the following 1248-residue polypeptide: Structural polyprotein (1248 aa).

Residues 1–10 (MEFIPTQTFY) show a composition bias toward polar residues. The tract at residues 1–104 (MEFIPTQTFY…KKKKPGRRER (104 aa)) is disordered. Residues 22–44 (RPTIQVIRPRPRPQRQAGQLAQL) are compositionally biased toward low complexity. Residues 36-68 (RQAGQLAQLISAVNKLTMRAVPQQKPRRNRKNK) form a host transcription inhibition region. Over residues 60 to 72 (KPRRNRKNKKQKQ) the composition is skewed to basic residues. The Nuclear localization signal signature appears at 61 to 99 (PRRNRKNKKQKQKQQAPQNNTNQKKQPPKKKPAQKKKKP). The segment covering 73-85 (KQQAPQNNTNQKK) has biased composition (low complexity). The binding to the viral RNA stretch occupies residues 84–114 (KKQPPKKKPAQKKKKPGRRERMCMKIENDCI). Residues 86 to 101 (QPPKKKPAQKKKKPGR) show a composition bias toward basic residues. The interval 99–113 (PGRRERMCMKIENDC) is ribosome-binding. Residues C113 and C128 are joined by a disulfide bond. The Peptidase S3 domain occupies 113-261 (CIFEVKHEGK…KITPEGAEEW (149 aa)). Catalysis depends on H139, which acts as the Charge relay system. Residues 144-154 (IDNADLAKLAF) carry the Nuclear export signal motif. The interval 155–160 (KRSSKY) is interaction with spike glycoprotein E2. The active-site Charge relay system is the D161. The interval 183-193 (PEGYYNWHHGA) is dimerization of the capsid protein. Catalysis depends on S213, which acts as the Charge relay system. The interval 219–223 (DNKGR) is dimerization of the capsid protein. The functions as an uncleaved signal peptide for the precursor of protein E3/E2 stretch occupies residues 262-274 (SLAIPVMCLLANT). Over 262 to 692 (SLAIPVMCLL…YYYELYPTMT (431 aa)) the chain is Extracellular. Cystine bridges form between C269-C278, C283-C287, C286-C318, C344-C450, C347-C353, C416-C430, C478-C591, C526-C550, and C528-C545. N-linked (GlcNAc...) asparagine; by host glycosylation occurs at N273. Interaction with host Mxra8 receptor stretches follow at residues 351-354 (HSCH) and 387-389 (HDW). Interaction with host Mxra8 receptor regions lie at residues 509-512 (QSGN) and 541-547 (VINNCKV). N-linked (GlcNAc...) asparagine; by host glycans are attached at residues N588 and N670. The helical transmembrane segment at 693–713 (VVVVSVASFILLSMVGMAVGM) threads the bilayer. Over 714 to 748 (CMCARRRCITPYELTPGATVPFLLSLICCIRTAKA) the chain is Cytoplasmic. The interaction with the capsid protein stretch occupies residues 716 to 720 (CARRR). S-palmitoyl cysteine; by host attachment occurs at residues C721, C741, and C742. Residues 721–741 (CITPYELTPGATVPFLLSLIC) are transient transmembrane before p62-6K protein processing. An intrachain disulfide couples C721 to C742. The Extracellular segment spans residues 749–763 (ATYQEAAVYLWNEQQ). Residues 764-784 (PLFWLQALIPLAALIVLCNCL) form a helical membrane-spanning segment. Residues 785-795 (RLLPCCCKTLA) lie on the Cytoplasmic side of the membrane. A helical membrane pass occupies residues 796–816 (FLAVMSIGAHTVSAYEHVTVI). Residues 817-1224 (PNTVGVPYKT…AMSWVQKITG (408 aa)) lie on the Extracellular side of the membrane. Intrachain disulfides connect C858–C923, C871–C903, C872–C905, and C877–C887. The segment at 893-910 (VYPFMWGGAYCFCDAENT) is E1 fusion peptide loop. N-linked (GlcNAc...) asparagine; by host glycosylation is found at N950 and N1079. Cystine bridges form between C1068–C1080, C1110–C1185, C1115–C1189, and C1137–C1179. A helical membrane pass occupies residues 1225 to 1245 (GVGLVVAVAALILIVVLCVSF). Residue C1242 is the site of S-palmitoyl cysteine; by host attachment. C1242 carries the S-stearoyl cysteine; by host lipid modification. The Cytoplasmic segment spans residues 1246-1248 (SRH).

Belongs to the alphavirus structural polyprotein family. In terms of assembly, homodimer. Homomultimer. Interacts with host karyopherin KPNA4; this interaction allows the nuclear import of the viral capsid protein. Interacts with spike glycoprotein E2. Interacts with host IRAK1; the interaction leads to inhibition of IRAK1-dependent signaling. The precursor of protein E3/E2 and E1 form a heterodimer shortly after synthesis. As to quaternary structure, interacts with spike glycoprotein E2. The precursor of protein E3/E2 and E1 form a heterodimer shortly after synthesis. Processing of the precursor of protein E3/E2 into E2 and E3 results in a heterodimer of the spike glycoproteins E2 and E1. Spike at virion surface are constituted of three E2-E1 heterodimers. After target cell attachment and endocytosis, E1 changes conformation to form homotrimers. Interacts with 6K protein. Interacts with host MXRA8; this interaction mediates virus entry. The interaction involves 2 adjacent E2-E1 heterodimers. In terms of assembly, interacts with spike glycoprotein E1. Processing of the precursor of protein E3/E2 into E2 and E3 results in a heterodimer of the spike glycoproteins E2 and E1. Spike at virion surface are constituted of a trimer of E2-E1 heterodimers. Interacts with 6K protein. Interacts with host MXRA8; this interaction mediates virus entry. The interaction involves 2 adjacent E2-E1 heterodimers. Oligomer. Interacts with spike glycoprotein E1. Interacts with spike glycoprotein E2. Post-translationally, specific enzymatic cleavages in vivo yield mature proteins. Capsid protein is auto-cleaved during polyprotein translation, unmasking a signal peptide at the N-terminus of the precursor of E3/E2. The remaining polyprotein is then targeted to the host endoplasmic reticulum, where host signal peptidase cleaves it into pE2, 6K and E1 proteins. pE2 is further processed to mature E3 and E2 by host furin in trans-Golgi vesicle. In terms of processing, palmitoylated via thioester bonds. These palmitoylations may induce disruption of the C-terminus transmembrane. This would result in the reorientation of E2 C-terminus from lumenal to cytoplasmic side. N-glycosylated. Post-translationally, palmitoylated via thioester bonds.

The protein localises to the virion. It is found in the host cytoplasm. The protein resides in the host cell membrane. Its subcellular location is the host nucleus. It localises to the virion membrane. The protein localises to the host Golgi apparatus. It is found in the host trans-Golgi network. The protein resides in the host endoplasmic reticulum. The catalysed reaction is Autocatalytic release of the core protein from the N-terminus of the togavirus structural polyprotein by hydrolysis of a -Trp-|-Ser- bond.. Its function is as follows. Forms an icosahedral capsid with a T=4 symmetry composed of 240 copies of the capsid protein surrounded by a lipid membrane through which penetrate 80 spikes composed of trimers of E1-E2 heterodimers. The capsid protein binds to the viral RNA genome at a site adjacent to a ribosome binding site for viral genome translation following genome release. Possesses a protease activity that results in its autocatalytic cleavage from the nascent structural protein. Following its self-cleavage, the capsid protein transiently associates with ribosomes, and within several minutes the protein binds to viral RNA and rapidly assembles into icosahedric core particles. The resulting nucleocapsid eventually associates with the cytoplasmic domain of the spike glycoprotein E2 at the cell membrane, leading to budding and formation of mature virions. In case of infection, new virions attach to target cells and after clathrin-mediated endocytosis their membrane fuses with the host endosomal membrane. This leads to the release of the nucleocapsid into the cytoplasm, followed by an uncoating event necessary for the genomic RNA to become accessible. The uncoating might be triggered by the interaction of capsid proteins with ribosomes. Binding of ribosomes would release the genomic RNA since the same region is genomic RNA-binding and ribosome-binding. Specifically inhibits interleukin-1 receptor-associated kinase 1/IRAK1-dependent signaling during viral entry, representing a means by which the alphaviruses may evade innate immune detection and activation prior to viral gene expression. Degrades host cyclic GMP-AMP synthase (CGAS) thereby inhibiting the cGAS-STING pathway. Provides the signal sequence for the translocation of the precursor of protein E3/E2 to the host endoplasmic reticulum. Furin-cleaved E3 remains associated with spike glycoprotein E1 and mediates pH protection of the latter during the transport via the secretory pathway. After virion release from the host cell, the assembly protein E3 is gradually released in the extracellular space. In terms of biological role, plays a role in viral attachment to target host cell, by binding to the cell receptor MXRA8. Synthesized as a p62 precursor which is processed by furin at the cell membrane just before virion budding, giving rise to E2-E1 heterodimer. The p62-E1 heterodimer is stable, whereas E2-E1 is unstable and dissociate at low pH. p62 is processed at the last step, presumably to avoid E1 fusion activation before its final export to cell surface. E2 C-terminus contains a transitory transmembrane that would be disrupted by palmitoylation, resulting in reorientation of the C-terminal tail from lumenal to cytoplasmic side. This step is critical since E2 C-terminus is involved in budding by interacting with capsid proteins. This release of E2 C-terminus in cytoplasm occurs lately in protein export, and precludes premature assembly of particles at the endoplasmic reticulum membrane. Functionally, acts as a viroporin that participates in virus glycoprotein processing and transport to the plasma membrane, cell permeabilization and budding of viral particles. Disrupts the calcium homeostasis of the cell, probably at the endoplasmic reticulum level. This leads to cytoplasmic calcium elevation. Because of its lipophilic properties, the 6K protein is postulated to influence the selection of lipids that interact with the transmembrane domains of the glycoproteins, which, in turn, affects the deformability of the bilayer required for the extreme curvature that occurs as budding proceeds. Present in low amount in virions, about 3% compared to viral glycoproteins. Its function is as follows. Class II viral fusion protein. Fusion activity is inactive as long as E1 is bound to E2 in mature virion. After virus attachment to target cell and endocytosis, acidification of the endosome induce dissociation of E1/E2 heterodimer and concomitant trimerization of the E1 subunits. This E1 trimer is fusion active, and promotes release of viral nucleocapsid in cytoplasm after endosome and viral membrane fusion. Efficient fusion requires the presence of cholesterol and sphingolipid in the target membrane. In Chikungunya virus (strain S27-African prototype) (CHIKV), this protein is Structural polyprotein.